A 239-amino-acid chain; its full sequence is Diablo IAP-binding mitochondrial protein (239 aa).

Residues 1 to 21 (MAALKSWLSRSVTSFFRYRQC) constitute a mitochondrion transit peptide. Positions 56-60 (AVPIA) match the IAP-binding motif. The tract at residues 217–239 (RQKTQEEGEERAESEQEAYLRED) is disordered.

Belongs to the Smac/DIABLO protein family. In terms of assembly, homodimer. Interacts with BIRC2/c-IAP1 (via BIR3 domain). Interacts with BIRC6/BRUCE; inhibits BIRC6 activity. Interacts with BIRC7/livin. Interacts with XIAP/BIRC4 (via BIR3 domain). Interacts with the monomeric and dimeric form of BIRC5/survivin. Interacts with AREL1 (via HECT domain); in the cytoplasm following induction of apoptosis. Interacts with BEX3. In terms of processing, ubiquitinated by BIRC7/livin. Ubiquitinated by BIRC6. Post-translationally, the precursor form is proteolytically cleaved by mitochondrial processing peptidase MPP to remove the transit peptide and produce an intermediate form. This is then processed by PARL to produce the mature cleaved form which is released from mitochondria into the cytosol in apoptotic cells. As to expression, ubiquitously expressed with highest expression in testis. Expression is also high in heart, liver, kidney, spleen, prostate and ovary. Low in brain, lung, thymus and peripheral blood leukocytes. Isoform 3 is ubiquitously expressed.

Its subcellular location is the mitochondrion. The protein localises to the cytoplasm. It localises to the cytosol. In terms of biological role, promotes apoptosis by activating caspases in the cytochrome c/Apaf-1/caspase-9 pathway. Acts by opposing the inhibitory activity of inhibitor of apoptosis proteins (IAP). Inhibits the activity of BIRC6/BRUCE by inhibiting its binding to caspases. Functionally, attenuates the stability and apoptosis-inhibiting activity of XIAP/BIRC4 by promoting XIAP/BIRC4 ubiquitination and degradation through the ubiquitin-proteasome pathway. Also disrupts XIAP/BIRC4 interacting with processed caspase-9 and promotes caspase-3 activation. Defective in the capacity to down-regulate the XIAP/BIRC4 abundance. This Homo sapiens (Human) protein is Diablo IAP-binding mitochondrial protein.